The chain runs to 135 residues: Large ribosomal subunit protein mL41B (135 aa).

The transit peptide at 1 to 13 directs the protein to the mitochondrion; the sequence is MGLITKIARGLVR.

The protein belongs to the mitochondrion-specific ribosomal protein mL41 family. In terms of assembly, component of the mitochondrial ribosome large subunit (39S) which comprises a 16S rRNA and about 50 distinct proteins.

The protein localises to the mitochondrion. In terms of biological role, component of the mitochondrial ribosome large subunit. Also involved in apoptosis and cell cycle. This Xenopus laevis (African clawed frog) protein is Large ribosomal subunit protein mL41B (mrpl41-b).